The chain runs to 239 residues: LRRN4 C-terminal-like protein (239 aa).

The N-terminal stretch at 1–19 (MLGSLSLLWLAAMTTSLVS) is a signal peptide. Over 20–194 (QPQILTLEDY…KFIMPPKPVT (175 aa)) the chain is Extracellular. The region spanning 82 to 179 (QPEPPRLGEV…EGPENWTGPS (98 aa)) is the Fibronectin type-III domain. 2 N-linked (GlcNAc...) asparagine glycosylation sites follow: Asn-132 and Asn-174. The chain crosses the membrane as a helical span at residues 195–215 (LVYAAVGVGTALALLSCAALV). Over 216 to 239 (WHFCLRERWGCPRRQGMAQASEAL) the chain is Cytoplasmic.

Its subcellular location is the membrane. This Mus musculus (Mouse) protein is LRRN4 C-terminal-like protein (Lrrn4cl).